We begin with the raw amino-acid sequence, 531 residues long: Galactose/methyl galactoside import permease protein MglC (531 aa).

A run of 10 helical transmembrane segments spans residues 193–213 (FFLA…CIVV), 239–259 (MFYA…LSIG), 267–287 (VVTG…GLGP), 300–320 (VMSL…AGFF), 326–346 (IHPF…LFFG), 376–396 (LVTF…AWFI), 424–444 (FGVT…GAFF), 461–481 (LDAI…IGKL), 483–503 (GAVV…FLGI), and 505–525 (TNLQ…LDSV).

This sequence belongs to the binding-protein-dependent transport system permease family. AraH/RbsC subfamily. In terms of assembly, the complex is composed of one ATP-binding protein (MglA), two transmembrane proteins (MglC) and a solute-binding protein (MglB).

Its subcellular location is the cell membrane. Its function is as follows. Part of the ABC transporter complex MglABC involved in galactose/methyl galactoside import. Probably responsible for the translocation of the substrate across the membrane. In Treponema pallidum (strain Nichols), this protein is Galactose/methyl galactoside import permease protein MglC (mglC).